The sequence spans 369 residues: Glutamate 5-kinase (369 aa).

Residue Lys-7 participates in ATP binding. Substrate is bound by residues Ser-48, Asp-135, and Asn-147. ATP contacts are provided by residues 167-168 (TD) and 208-214 (SGGMASK). The PUA domain maps to 275–353 (AGALHLDEGA…HEIAALLGIE (79 aa)).

Belongs to the glutamate 5-kinase family.

It is found in the cytoplasm. The enzyme catalyses L-glutamate + ATP = L-glutamyl 5-phosphate + ADP. It functions in the pathway amino-acid biosynthesis; L-proline biosynthesis; L-glutamate 5-semialdehyde from L-glutamate: step 1/2. Its function is as follows. Catalyzes the transfer of a phosphate group to glutamate to form L-glutamate 5-phosphate. The polypeptide is Glutamate 5-kinase (Gloeobacter violaceus (strain ATCC 29082 / PCC 7421)).